The primary structure comprises 164 residues: NADH-quinone oxidoreductase subunit I (164 aa).

4Fe-4S ferredoxin-type domains lie at 56–85 (RRYE…IEAE) and 95–124 (TRYD…EGPN). 8 residues coordinate [4Fe-4S] cluster: Cys-65, Cys-68, Cys-71, Cys-75, Cys-104, Cys-107, Cys-110, and Cys-114.

It belongs to the complex I 23 kDa subunit family. In terms of assembly, NDH-1 is composed of 14 different subunits. Subunits NuoA, H, J, K, L, M, N constitute the membrane sector of the complex. It depends on [4Fe-4S] cluster as a cofactor.

It localises to the cell inner membrane. It carries out the reaction a quinone + NADH + 5 H(+)(in) = a quinol + NAD(+) + 4 H(+)(out). Functionally, NDH-1 shuttles electrons from NADH, via FMN and iron-sulfur (Fe-S) centers, to quinones in the respiratory chain. The immediate electron acceptor for the enzyme in this species is believed to be ubiquinone. Couples the redox reaction to proton translocation (for every two electrons transferred, four hydrogen ions are translocated across the cytoplasmic membrane), and thus conserves the redox energy in a proton gradient. The polypeptide is NADH-quinone oxidoreductase subunit I (Anaplasma phagocytophilum (strain HZ)).